The primary structure comprises 439 residues: Xylose isomerase (439 aa).

Catalysis depends on residues H101 and D104. Mg(2+) contacts are provided by E232, E268, H271, D296, D307, D309, and D339.

It belongs to the xylose isomerase family. In terms of assembly, homotetramer. Mg(2+) serves as cofactor.

Its subcellular location is the cytoplasm. It catalyses the reaction alpha-D-xylose = alpha-D-xylulofuranose. This Haemophilus influenzae (strain PittEE) protein is Xylose isomerase.